A 152-amino-acid polypeptide reads, in one-letter code: UPF0225 protein KPK_2103 (152 aa).

The protein belongs to the UPF0225 family.

The chain is UPF0225 protein KPK_2103 from Klebsiella pneumoniae (strain 342).